A 267-amino-acid chain; its full sequence is MKVTIAHNNYDKTLKTVAYLKEILKKKNVVFDAKYPDVVISVGGDGTLINAFHRYENQVDSVRFIGVHTGHLGFYTDWRNYDIDKMVDALLLTDEAPAKYPLLEIKLITESGETKYHLAVNESAVKRVSHTLEADVYINDELFENFRGDGLCVSTPTGSTAYSKSLGGAVIHPRLKALQMTEIASINNRVFRTLSAPIVIAPDQWITIVPNADHFVMTVDGARIDVRNAKKIEYRISHHSIQFDQFGHHHFWSRVQDAFIGENNSND.

The active-site Proton acceptor is Asp-45. Residues Asp-45–Gly-46, Asn-121–Glu-122, Arg-147, Asp-149, Thr-160–Ser-165, and Ala-184 each bind NAD(+).

The protein belongs to the NAD kinase family. A divalent metal cation serves as cofactor.

It is found in the cytoplasm. The enzyme catalyses NAD(+) + ATP = ADP + NADP(+) + H(+). Its function is as follows. Involved in the regulation of the intracellular balance of NAD and NADP, and is a key enzyme in the biosynthesis of NADP. Catalyzes specifically the phosphorylation on 2'-hydroxyl of the adenosine moiety of NAD to yield NADP. In Lactobacillus acidophilus (strain ATCC 700396 / NCK56 / N2 / NCFM), this protein is NAD kinase.